A 251-amino-acid polypeptide reads, in one-letter code: Ubiquinone/menaquinone biosynthesis C-methyltransferase UbiE (251 aa).

S-adenosyl-L-methionine is bound by residues threonine 74, aspartate 95, 123–124 (NA), and serine 140.

The protein belongs to the class I-like SAM-binding methyltransferase superfamily. MenG/UbiE family.

The enzyme catalyses a 2-demethylmenaquinol + S-adenosyl-L-methionine = a menaquinol + S-adenosyl-L-homocysteine + H(+). It carries out the reaction a 2-methoxy-6-(all-trans-polyprenyl)benzene-1,4-diol + S-adenosyl-L-methionine = a 5-methoxy-2-methyl-3-(all-trans-polyprenyl)benzene-1,4-diol + S-adenosyl-L-homocysteine + H(+). The protein operates within quinol/quinone metabolism; menaquinone biosynthesis; menaquinol from 1,4-dihydroxy-2-naphthoate: step 2/2. It functions in the pathway cofactor biosynthesis; ubiquinone biosynthesis. Functionally, methyltransferase required for the conversion of demethylmenaquinol (DMKH2) to menaquinol (MKH2) and the conversion of 2-polyprenyl-6-methoxy-1,4-benzoquinol (DDMQH2) to 2-polyprenyl-3-methyl-6-methoxy-1,4-benzoquinol (DMQH2). This is Ubiquinone/menaquinone biosynthesis C-methyltransferase UbiE from Salmonella paratyphi A (strain AKU_12601).